The chain runs to 89 residues: Barrier-to-autointegration factor 1 (89 aa).

Belongs to the BAF family. Interacts with emr-1 and lem-2. Interacts with lem-4l, leading to decreased phosphorylation by VRK1 and promoting dephosphorylation by protein phosphatase 2A (PP2A). Post-translationally, phosphorylated by vrk-1. Phosphorylation by vrk-1 in mitosis is essential to achieve correct timing of recruitment of nuclear envelope components during nuclear envelope assembly. Dephosphorylated by protein phosphatase 2A (PP2A) following interaction with lem-4l during mitotic exit, leading to mitotic nuclear envelope reassembly.

The protein localises to the nucleus. In terms of biological role, DNA-binding protein which plays an essential role in nuclear envelope formation. Required for normal chromosome segregation during mitosis. Associates with the nuclear lamina via its interaction with LEM domain containing proteins emr-1 and lem-2. In association with lem-3, plays a role in radiation-induced DNA damage repair response. This is Barrier-to-autointegration factor 1 (baf-1) from Caenorhabditis elegans.